The chain runs to 162 residues: 3-dehydroquinate dehydratase (162 aa).

Catalysis depends on Y22, which acts as the Proton acceptor. 3 residues coordinate substrate: N73, H79, and D86. The Proton donor role is filled by H99. Substrate contacts are provided by residues 100–101 (LS) and R110.

The protein belongs to the type-II 3-dehydroquinase family. In terms of assembly, homododecamer.

It carries out the reaction 3-dehydroquinate = 3-dehydroshikimate + H2O. Its pathway is metabolic intermediate biosynthesis; chorismate biosynthesis; chorismate from D-erythrose 4-phosphate and phosphoenolpyruvate: step 3/7. Its function is as follows. Catalyzes a trans-dehydration via an enolate intermediate. The polypeptide is 3-dehydroquinate dehydratase (Sulfurovum sp. (strain NBC37-1)).